Reading from the N-terminus, the 472-residue chain is Adenylyl cyclase-associated protein 1 (472 aa).

Ala-2 bears the N-acetylalanine mark. Tyr-31 bears the Phosphotyrosine mark. Ser-34 bears the Phosphoserine mark. An N6-acetyllysine modification is found at Lys-81. The interval 216–253 (ELSGLPSGPSAGSGPPPPPPGPPPPPVPTSSGSDDSAS) is disordered. Over residues 218 to 228 (SGLPSGPSAGS) the composition is skewed to low complexity. Pro residues predominate over residues 229–243 (GPPPPPPGPPPPPVP). The span at 244-253 (TSSGSDDSAS) shows a compositional bias: low complexity. Lys-287 is subject to N6-methyllysine. A phosphoserine mark is found at Ser-290, Ser-295, and Ser-301. The interval 290–312 (SGLIRSGPKPFSASKPDPPKPVA) is disordered. The 144-residue stretch at 307–450 (PPKPVAKKEP…EGGDFNEFPV (144 aa)) folds into the C-CAP/cofactor C-like domain. Lys-345 participates in a covalent cross-link: Glycyl lysine isopeptide (Lys-Gly) (interchain with G-Cter in SUMO1).

This sequence belongs to the CAP family. As to quaternary structure, homodimer. Binds actin monomers.

The protein resides in the cell membrane. Its function is as follows. Directly regulates filament dynamics and has been implicated in a number of complex developmental and morphological processes, including mRNA localization and the establishment of cell polarity. The chain is Adenylyl cyclase-associated protein 1 (CAP1) from Bos taurus (Bovine).